Here is a 361-residue protein sequence, read N- to C-terminus: Phospho-N-acetylmuramoyl-pentapeptide-transferase (361 aa).

The next 10 membrane-spanning stretches (helical) occupy residues 25–45 (TGGAVVTGALFVFLCGPWIIN), 72–92 (TPTMGGLMILSGLTVGTVLWA), 95–115 (VNPYVWIVLAVTLGFGFVGFY), 133–153 (TRLLIEFAIAGAACFALVWLG), 169–189 (VVLNLGWYFVIFGAFVIVGAG), 200–220 (GLAIVPVMIAAASFGLIAYLA), 240–260 (LAVLCGALLGAGLGFLWFNAP), 264–284 (IFMGDTGSLALGGMLGSIAVA), 289–309 (IVLAVIGGLFVLEAVSVIVQV), and 338–358 (QIVIRFWIIAVMLALAGLATL).

The protein belongs to the glycosyltransferase 4 family. MraY subfamily. It depends on Mg(2+) as a cofactor.

Its subcellular location is the cell inner membrane. The catalysed reaction is UDP-N-acetyl-alpha-D-muramoyl-L-alanyl-gamma-D-glutamyl-meso-2,6-diaminopimeloyl-D-alanyl-D-alanine + di-trans,octa-cis-undecaprenyl phosphate = di-trans,octa-cis-undecaprenyl diphospho-N-acetyl-alpha-D-muramoyl-L-alanyl-D-glutamyl-meso-2,6-diaminopimeloyl-D-alanyl-D-alanine + UMP. The protein operates within cell wall biogenesis; peptidoglycan biosynthesis. Functionally, catalyzes the initial step of the lipid cycle reactions in the biosynthesis of the cell wall peptidoglycan: transfers peptidoglycan precursor phospho-MurNAc-pentapeptide from UDP-MurNAc-pentapeptide onto the lipid carrier undecaprenyl phosphate, yielding undecaprenyl-pyrophosphoryl-MurNAc-pentapeptide, known as lipid I. The chain is Phospho-N-acetylmuramoyl-pentapeptide-transferase from Rhodopseudomonas palustris (strain BisB5).